We begin with the raw amino-acid sequence, 376 residues long: Beta sliding clamp (376 aa).

It belongs to the beta sliding clamp family. As to quaternary structure, forms a ring-shaped head-to-tail homodimer around DNA which binds and tethers DNA polymerases and other proteins to the DNA. The DNA replisome complex has a single clamp-loading complex (3 tau and 1 each of delta, delta', psi and chi subunits) which binds 3 Pol III cores (1 core on the leading strand and 2 on the lagging strand) each with a beta sliding clamp dimer. Additional proteins in the replisome are other copies of gamma, psi and chi, Ssb, DNA helicase and RNA primase.

It is found in the cytoplasm. Functionally, confers DNA tethering and processivity to DNA polymerases and other proteins. Acts as a clamp, forming a ring around DNA (a reaction catalyzed by the clamp-loading complex) which diffuses in an ATP-independent manner freely and bidirectionally along dsDNA. Initially characterized for its ability to contact the catalytic subunit of DNA polymerase III (Pol III), a complex, multichain enzyme responsible for most of the replicative synthesis in bacteria; Pol III exhibits 3'-5' exonuclease proofreading activity. The beta chain is required for initiation of replication as well as for processivity of DNA replication. This chain is Beta sliding clamp (dnaN), found in Streptomyces coelicolor (strain ATCC BAA-471 / A3(2) / M145).